A 65-amino-acid chain; its full sequence is Large ribosomal subunit protein uL30 (65 aa).

Belongs to the universal ribosomal protein uL30 family. As to quaternary structure, part of the 50S ribosomal subunit.

In Chloroflexus aurantiacus (strain ATCC 29366 / DSM 635 / J-10-fl), this protein is Large ribosomal subunit protein uL30.